The chain runs to 153 residues: 6,7-dimethyl-8-ribityllumazine synthase (153 aa).

Residues F22, 56-58, and 80-82 each bind 5-amino-6-(D-ribitylamino)uracil; these read AFE and TVI. 85-86 serves as a coordination point for (2S)-2-hydroxy-3-oxobutyl phosphate; it reads ST. H88 acts as the Proton donor in catalysis. F113 contacts 5-amino-6-(D-ribitylamino)uracil. R127 is a binding site for (2S)-2-hydroxy-3-oxobutyl phosphate.

The protein belongs to the DMRL synthase family. Forms an icosahedral capsid composed of 60 subunits, arranged as a dodecamer of pentamers.

It carries out the reaction (2S)-2-hydroxy-3-oxobutyl phosphate + 5-amino-6-(D-ribitylamino)uracil = 6,7-dimethyl-8-(1-D-ribityl)lumazine + phosphate + 2 H2O + H(+). It participates in cofactor biosynthesis; riboflavin biosynthesis; riboflavin from 2-hydroxy-3-oxobutyl phosphate and 5-amino-6-(D-ribitylamino)uracil: step 1/2. In terms of biological role, catalyzes the formation of 6,7-dimethyl-8-ribityllumazine by condensation of 5-amino-6-(D-ribitylamino)uracil with 3,4-dihydroxy-2-butanone 4-phosphate. This is the penultimate step in the biosynthesis of riboflavin. In Actinobacillus pleuropneumoniae serotype 7 (strain AP76), this protein is 6,7-dimethyl-8-ribityllumazine synthase.